The chain runs to 443 residues: Methylenetetrahydrofolate--tRNA-(uracil-5-)-methyltransferase TrmFO (443 aa).

FAD is bound at residue 8 to 13 (GAGLAG).

The protein belongs to the MnmG family. TrmFO subfamily. FAD is required as a cofactor.

The protein localises to the cytoplasm. The enzyme catalyses uridine(54) in tRNA + (6R)-5,10-methylene-5,6,7,8-tetrahydrofolate + NADH + H(+) = 5-methyluridine(54) in tRNA + (6S)-5,6,7,8-tetrahydrofolate + NAD(+). It catalyses the reaction uridine(54) in tRNA + (6R)-5,10-methylene-5,6,7,8-tetrahydrofolate + NADPH + H(+) = 5-methyluridine(54) in tRNA + (6S)-5,6,7,8-tetrahydrofolate + NADP(+). In terms of biological role, catalyzes the folate-dependent formation of 5-methyl-uridine at position 54 (M-5-U54) in all tRNAs. In Thermus thermophilus (strain ATCC BAA-163 / DSM 7039 / HB27), this protein is Methylenetetrahydrofolate--tRNA-(uracil-5-)-methyltransferase TrmFO.